A 325-amino-acid chain; its full sequence is Probable cell division protein WhiA (325 aa).

The segment at residues Ser280–Lys313 is a DNA-binding region (H-T-H motif).

The protein belongs to the WhiA family.

In terms of biological role, involved in cell division and chromosome segregation. The chain is Probable cell division protein WhiA from Caldicellulosiruptor bescii (strain ATCC BAA-1888 / DSM 6725 / KCTC 15123 / Z-1320) (Anaerocellum thermophilum).